A 178-amino-acid polypeptide reads, in one-letter code: Large ribosomal subunit protein uL6 (178 aa).

Belongs to the universal ribosomal protein uL6 family. Part of the 50S ribosomal subunit.

Its function is as follows. This protein binds to the 23S rRNA, and is important in its secondary structure. It is located near the subunit interface in the base of the L7/L12 stalk, and near the tRNA binding site of the peptidyltransferase center. This chain is Large ribosomal subunit protein uL6, found in Thermoplasma volcanium (strain ATCC 51530 / DSM 4299 / JCM 9571 / NBRC 15438 / GSS1).